The chain runs to 422 residues: Phospho-N-acetylmuramoyl-pentapeptide-transferase (422 aa).

9 helical membrane passes run 28–48 (LMAIILSLLISAIFGEYFINL), 71–91 (VGVPTMGGIIIIVAILIPCLL), 95–115 (LHNIYMILMLITTIWLGTLGF), 136–156 (IIGQVGLGLIVGLTLYLSPSV), 208–228 (AQAVGWIIFVLVTIFVVTAVS), 239–259 (GMAAGNSAIIGLTLGILAYVS), 279–299 (LVIFICSFIGALIGFLWYNAF), 313–333 (IGGIIAVFAIIIHKELLIPIL), and 399–419 (KITVRFWIVTIVLAAITIITL).

The protein belongs to the glycosyltransferase 4 family. MraY subfamily. It depends on Mg(2+) as a cofactor.

It is found in the cell inner membrane. The catalysed reaction is UDP-N-acetyl-alpha-D-muramoyl-L-alanyl-gamma-D-glutamyl-meso-2,6-diaminopimeloyl-D-alanyl-D-alanine + di-trans,octa-cis-undecaprenyl phosphate = di-trans,octa-cis-undecaprenyl diphospho-N-acetyl-alpha-D-muramoyl-L-alanyl-D-glutamyl-meso-2,6-diaminopimeloyl-D-alanyl-D-alanine + UMP. It participates in cell wall biogenesis; peptidoglycan biosynthesis. Its function is as follows. Catalyzes the initial step of the lipid cycle reactions in the biosynthesis of the cell wall peptidoglycan: transfers peptidoglycan precursor phospho-MurNAc-pentapeptide from UDP-MurNAc-pentapeptide onto the lipid carrier undecaprenyl phosphate, yielding undecaprenyl-pyrophosphoryl-MurNAc-pentapeptide, known as lipid I. The sequence is that of Phospho-N-acetylmuramoyl-pentapeptide-transferase from Phocaeicola vulgatus (strain ATCC 8482 / DSM 1447 / JCM 5826 / CCUG 4940 / NBRC 14291 / NCTC 11154) (Bacteroides vulgatus).